The sequence spans 251 residues: Arginine and glutamate-rich protein 1-A (251 aa).

Over residues 1-48 (MGRSRSRSSSRSKHSKHSRKRSRSKSKSKKRSRSKEPKRNRRSRSRSG) the composition is skewed to basic residues. The segment at 1 to 53 (MGRSRSRSSSRSKHSKHSRKRSRSKSKSKKRSRSKEPKRNRRSRSRSGSRRDR) is necessary and sufficient for RNA binding. 2 disordered regions span residues 1–92 (MGRS…ERQR) and 215–251 (RMKL…KATE). 3 stretches are compositionally biased toward basic and acidic residues: residues 49–63 (SRRD…RTDM), 71–92 (RNND…ERQR), and 215–231 (RMKL…EEQK). A necessary and sufficient for transcriptional regulation region spans residues 54-251 (GGSPPDRTDM…RLSFSLKATE (198 aa)).

Belongs to the ARGLU1 family.

It localises to the nucleus. It is found in the nucleus speckle. The protein resides in the chromosome. Its function is as follows. Dual function regulator of gene expression; regulator of transcription and modulator of alternative splicing. General coactivator of nuclear receptor-induced gene expression. This Danio rerio (Zebrafish) protein is Arginine and glutamate-rich protein 1-A (arglu1a).